A 523-amino-acid polypeptide reads, in one-letter code: 2-isopropylmalate synthase (523 aa).

The region spanning 5-267 (VIIFDTTLRD…HTNINHHEIW (263 aa)) is the Pyruvate carboxyltransferase domain. Residues Asp-14, His-202, His-204, and Asn-238 each contribute to the Mn(2+) site. The interval 392-523 (RLDYFSVQSG…QNKENNKETV (132 aa)) is regulatory domain.

Belongs to the alpha-IPM synthase/homocitrate synthase family. LeuA type 1 subfamily. Homodimer. It depends on Mn(2+) as a cofactor.

The protein resides in the cytoplasm. It catalyses the reaction 3-methyl-2-oxobutanoate + acetyl-CoA + H2O = (2S)-2-isopropylmalate + CoA + H(+). It functions in the pathway amino-acid biosynthesis; L-leucine biosynthesis; L-leucine from 3-methyl-2-oxobutanoate: step 1/4. Functionally, catalyzes the condensation of the acetyl group of acetyl-CoA with 3-methyl-2-oxobutanoate (2-ketoisovalerate) to form 3-carboxy-3-hydroxy-4-methylpentanoate (2-isopropylmalate). The polypeptide is 2-isopropylmalate synthase (Salmonella dublin (strain CT_02021853)).